We begin with the raw amino-acid sequence, 523 residues long: 2-isopropylmalate synthase (523 aa).

The Pyruvate carboxyltransferase domain occupies Val-5–His-267. Mn(2+) contacts are provided by Asp-14, His-202, His-204, and Asn-238. The segment at Lys-392 to Val-523 is regulatory domain.

It belongs to the alpha-IPM synthase/homocitrate synthase family. LeuA type 1 subfamily. In terms of assembly, homodimer. Mn(2+) serves as cofactor.

Its subcellular location is the cytoplasm. It catalyses the reaction 3-methyl-2-oxobutanoate + acetyl-CoA + H2O = (2S)-2-isopropylmalate + CoA + H(+). It participates in amino-acid biosynthesis; L-leucine biosynthesis; L-leucine from 3-methyl-2-oxobutanoate: step 1/4. Functionally, catalyzes the condensation of the acetyl group of acetyl-CoA with 3-methyl-2-oxobutanoate (2-ketoisovalerate) to form 3-carboxy-3-hydroxy-4-methylpentanoate (2-isopropylmalate). This chain is 2-isopropylmalate synthase, found in Shewanella piezotolerans (strain WP3 / JCM 13877).